A 127-amino-acid polypeptide reads, in one-letter code: DNA-directed RNA polymerase subunit omega (127 aa).

This sequence belongs to the RNA polymerase subunit omega family. As to quaternary structure, the RNAP catalytic core consists of 2 alpha, 1 beta, 1 beta' and 1 omega subunit. When a sigma factor is associated with the core the holoenzyme is formed, which can initiate transcription.

It catalyses the reaction RNA(n) + a ribonucleoside 5'-triphosphate = RNA(n+1) + diphosphate. Functionally, promotes RNA polymerase assembly. Latches the N- and C-terminal regions of the beta' subunit thereby facilitating its interaction with the beta and alpha subunits. The sequence is that of DNA-directed RNA polymerase subunit omega from Rickettsia africae (strain ESF-5).